The following is a 364-amino-acid chain: MSRPLIADIDLDALRRNYCLARDQAPHSRAIAVVKADAYGHGAVACADALRDLAPAFAVACLEEALTLREAGITQPIVLLEGFFDAAELSLIDAHRLWTAVHSDWQIDALLAYRPRQPIPTWLKLDSGMHRLGFAPEAFEARWQRLAAATEHVTDLHLMTHFATADALDAAYFRRQMACIASLRQRLEAPVCLANSPATLAWPEAHGDWNRPGVMLYGSDPLEGANDASRALEPVMTLRSEIIAVRELAEGEAVGYGGRWRASRPSRIGVVAGGYGDGYDRHARDGTPVLVEGQRVPLAGKVSMDMLTVDLTELPEAGIGSPVVLWGEGLPIDEVARHCDTISYTLMTGVLPRVPRRYRNAETG.

Residue lysine 35 is the Proton acceptor; specific for D-alanine of the active site. Lysine 35 carries the N6-(pyridoxal phosphate)lysine modification. Arginine 131 provides a ligand contact to substrate. The active-site Proton acceptor; specific for L-alanine is tyrosine 256. Position 304 (methionine 304) interacts with substrate.

It belongs to the alanine racemase family. Pyridoxal 5'-phosphate is required as a cofactor.

It catalyses the reaction L-alanine = D-alanine. Its pathway is amino-acid biosynthesis; D-alanine biosynthesis; D-alanine from L-alanine: step 1/1. In terms of biological role, catalyzes the interconversion of L-alanine and D-alanine. May also act on other amino acids. The sequence is that of Alanine racemase (alr) from Chromohalobacter salexigens (strain ATCC BAA-138 / DSM 3043 / CIP 106854 / NCIMB 13768 / 1H11).